The following is a 476-amino-acid chain: Replication factor C large subunit (476 aa).

50–57 (GPPGVGKT) lines the ATP pocket. The segment at 447 to 476 (YEKGTKKGKGEKRRKGSDEGSGLLKWLKKD) is disordered. The span at 452–461 (KKGKGEKRRK) shows a compositional bias: basic residues.

Belongs to the activator 1 small subunits family. RfcL subfamily. In terms of assembly, heteromultimer composed of small subunits (RfcS) and large subunits (RfcL).

Its function is as follows. Part of the RFC clamp loader complex which loads the PCNA sliding clamp onto DNA. The chain is Replication factor C large subunit from Ignicoccus hospitalis (strain KIN4/I / DSM 18386 / JCM 14125).